We begin with the raw amino-acid sequence, 222 residues long: Dual specificity phosphatase 29 (222 aa).

One can recognise a Tyrosine-protein phosphatase domain in the interval histidine 54–glutamine 202. Histidine 146–arginine 153 lines the substrate pocket. Residue cysteine 147 is the Phosphocysteine intermediate of the active site. Residues valine 201–proline 222 form a disordered region. A compositionally biased stretch (basic and acidic residues) spans histidine 209–proline 222.

The protein belongs to the protein-tyrosine phosphatase family. Non-receptor class dual specificity subfamily. Homodimer. Interacts with PRKAA2.

It localises to the cytoplasm. Its subcellular location is the nucleus. The catalysed reaction is O-phospho-L-tyrosyl-[protein] + H2O = L-tyrosyl-[protein] + phosphate. It carries out the reaction O-phospho-L-seryl-[protein] + H2O = L-seryl-[protein] + phosphate. It catalyses the reaction O-phospho-L-threonyl-[protein] + H2O = L-threonyl-[protein] + phosphate. Dual specificity phosphatase able to dephosphorylate phosphotyrosine, phosphoserine and phosphothreonine residues within the same substrate, with a preference for phosphotyrosine as a substrate. Involved in the modulation of intracellular signaling cascades. In skeletal muscle regulates systemic glucose homeostasis by activating, AMPK, an energy sensor protein kinase. Affects MAP kinase signaling though modulation of the MAPK1/2 cascade in skeletal muscle promoting muscle cell differentiation, development and atrophy. The polypeptide is Dual specificity phosphatase 29 (DUSP29) (Sus scrofa (Pig)).